The following is a 222-amino-acid chain: N-(5'-phosphoribosyl)anthranilate isomerase (222 aa).

The protein belongs to the TrpF family.

It carries out the reaction N-(5-phospho-beta-D-ribosyl)anthranilate = 1-(2-carboxyphenylamino)-1-deoxy-D-ribulose 5-phosphate. It functions in the pathway amino-acid biosynthesis; L-tryptophan biosynthesis; L-tryptophan from chorismate: step 3/5. The polypeptide is N-(5'-phosphoribosyl)anthranilate isomerase (Gloeobacter violaceus (strain ATCC 29082 / PCC 7421)).